A 339-amino-acid polypeptide reads, in one-letter code: Heat-inducible transcription repressor HrcA (339 aa).

The protein belongs to the HrcA family.

Functionally, negative regulator of class I heat shock genes (grpE-dnaK-dnaJ and groELS operons). Prevents heat-shock induction of these operons. The protein is Heat-inducible transcription repressor HrcA of Clostridioides difficile (strain 630) (Peptoclostridium difficile).